Here is a 247-residue protein sequence, read N- to C-terminus: ATP synthase subunit a, chloroplastic (247 aa).

5 helical membrane passes run 38–58 (QVLI…IIAV), 95–115 (VPFI…GALL), 134–154 (INTT…AGLS), 199–219 (LVVV…VMFL), and 220–240 (GLFT…AYIG).

This sequence belongs to the ATPase A chain family. F-type ATPases have 2 components, CF(1) - the catalytic core - and CF(0) - the membrane proton channel. CF(1) has five subunits: alpha(3), beta(3), gamma(1), delta(1), epsilon(1). CF(0) has four main subunits: a, b, b' and c.

The protein resides in the plastid. It is found in the chloroplast thylakoid membrane. Key component of the proton channel; it plays a direct role in the translocation of protons across the membrane. The protein is ATP synthase subunit a, chloroplastic of Oryza nivara (Indian wild rice).